Reading from the N-terminus, the 334-residue chain is Ornithine carbamoyltransferase (334 aa).

Carbamoyl phosphate contacts are provided by residues 56–59 (STRT), glutamine 83, arginine 107, and 134–137 (HPTQ). L-ornithine is bound by residues asparagine 168, aspartate 232, and 236-237 (SM). Carbamoyl phosphate is bound by residues 274–275 (CL) and arginine 320.

It belongs to the aspartate/ornithine carbamoyltransferase superfamily. OTCase family.

It is found in the cytoplasm. It carries out the reaction carbamoyl phosphate + L-ornithine = L-citrulline + phosphate + H(+). Its pathway is amino-acid biosynthesis; L-arginine biosynthesis; L-arginine from L-ornithine and carbamoyl phosphate: step 1/3. Reversibly catalyzes the transfer of the carbamoyl group from carbamoyl phosphate (CP) to the N(epsilon) atom of ornithine (ORN) to produce L-citrulline. The polypeptide is Ornithine carbamoyltransferase (Escherichia coli (strain 55989 / EAEC)).